The chain runs to 315 residues: MEKFKAVLDLQIKHRSALGYGLVTLLTAGGEKIFSTVVFQCPCTATLNLTYGLVFLLVPALALFLLGYALSARTWRLLTGCCSRSASTRSSSGLRSTLVCAQVSAVAALAPLTWVAVALLGGSFYQCAVSGSTRLASYLCKDRNHSCIAKLPQVPCNKQEAEMQEILSQLKAQSQVLGWVLIAAVIFLLLVFKCVSRCFSPVSYLQLKFWEIYLEKEKQILQSQAAEHATQLARENIRSFFECSKPKECNTPSRKDWQQISALYTFNSKNQFYSMLHKYVSRKEVSSSLHSVEGDVVVPVLGFVDDAAMANTHGV.

At 1-21 the chain is on the cytoplasmic side; that stretch reads MEKFKAVLDLQIKHRSALGYG. The helical transmembrane segment at 22–37 threads the bilayer; that stretch reads LVTLLTAGGEKIFSTV. Residues 38–46 lie on the Extracellular side of the membrane; the sequence is VFQCPCTAT. 3 disulfide bridges follow: Cys41–Cys127, Cys43–Cys156, and Cys140–Cys147. Residues 47–68 traverse the membrane as a helical segment; it reads LNLTYGLVFLLVPALALFLLGY. Residues 69 to 103 are Cytoplasmic-facing; sequence ALSARTWRLLTGCCSRSASTRSSSGLRSTLVCAQV. A helical transmembrane segment spans residues 104–128; the sequence is SAVAALAPLTWVAVALLGGSFYQCA. The Extracellular segment spans residues 129-169; that stretch reads VSGSTRLASYLCKDRNHSCIAKLPQVPCNKQEAEMQEILSQ. A helical transmembrane segment spans residues 170 to 192; sequence LKAQSQVLGWVLIAAVIFLLLVF. The Cytoplasmic portion of the chain corresponds to 193–315; it reads KCVSRCFSPV…DAAMANTHGV (123 aa).

The protein belongs to the CALHM family. Oligomerizes to form decameric and undecameric channels.

The protein localises to the cell membrane. The enzyme catalyses ATP(in) = ATP(out). Pore-forming subunit of an ATP-permeable channel. In response to pathogen-derived and proinflammatory stimuli, relocates from intracellular compartments to NK-dendritic cell and NK-macrophage immune synapses where it mediates ATP efflux and NK cell activation involved in antimicrobial and antitumor responses. May assemble to form gap junction channel-like structures with gating and ion conductance likely regulated by membrane lipids and voltage rather than by extracellular calcium levels. This Rattus norvegicus (Rat) protein is Calcium homeostasis modulator protein 6.